The sequence spans 179 residues: Large ribosomal subunit protein uL5 (179 aa).

It belongs to the universal ribosomal protein uL5 family. As to quaternary structure, part of the 50S ribosomal subunit; part of the 5S rRNA/L5/L18/L25 subcomplex. Contacts the 5S rRNA and the P site tRNA. Forms a bridge to the 30S subunit in the 70S ribosome.

Functionally, this is one of the proteins that bind and probably mediate the attachment of the 5S RNA into the large ribosomal subunit, where it forms part of the central protuberance. In the 70S ribosome it contacts protein S13 of the 30S subunit (bridge B1b), connecting the 2 subunits; this bridge is implicated in subunit movement. Contacts the P site tRNA; the 5S rRNA and some of its associated proteins might help stabilize positioning of ribosome-bound tRNAs. The sequence is that of Large ribosomal subunit protein uL5 from Hamiltonella defensa subsp. Acyrthosiphon pisum (strain 5AT).